A 505-amino-acid chain; its full sequence is Trans-cinnamate 4-monooxygenase C4H2 (505 aa).

2 short sequence motifs (nuclear localization signal) span residues 161 to 168 and 247 to 254; these read VKKMKESN and EKRLKLFK. Cysteine 447 contacts heme.

The protein belongs to the cytochrome P450 family. It depends on heme as a cofactor.

It is found in the nucleus. It catalyses the reaction (E)-cinnamate + reduced [NADPH--hemoprotein reductase] + O2 = (E)-4-coumarate + oxidized [NADPH--hemoprotein reductase] + H2O + H(+). It participates in phenylpropanoid metabolism; trans-4-coumarate biosynthesis; trans-4-coumarate from trans-cinnamate: step 1/1. Its function is as follows. Component of the floral volatile benzenoid/phenylpropanoid (FVBP) biosynthetic pathway that controls carbon flux to pigments essential for pollination or UV protection, to numerous pytoalexins synthesized by plants when challenged by pathogens, and to lignins. The polypeptide is Trans-cinnamate 4-monooxygenase C4H2 (Petunia hybrida (Petunia)).